A 224-amino-acid chain; its full sequence is 7-cyano-7-deazaguanine synthase (224 aa).

Ile9–Ala19 contributes to the ATP binding site. The Zn(2+) site is built by Cys190, Cys198, Cys201, and Cys204.

It belongs to the QueC family. The cofactor is Zn(2+).

It catalyses the reaction 7-carboxy-7-deazaguanine + NH4(+) + ATP = 7-cyano-7-deazaguanine + ADP + phosphate + H2O + H(+). It participates in purine metabolism; 7-cyano-7-deazaguanine biosynthesis. In terms of biological role, catalyzes the ATP-dependent conversion of 7-carboxy-7-deazaguanine (CDG) to 7-cyano-7-deazaguanine (preQ(0)). This chain is 7-cyano-7-deazaguanine synthase, found in Campylobacter jejuni (strain RM1221).